The primary structure comprises 505 residues: Alpha-1-syntrophin (505 aa).

2 disordered regions span residues Met1 to Gly24 and Leu40 to Pro75. 2 PH domains span residues Arg6–Asn269 and Asp293–His401. The segment covering Arg9–Gly18 has biased composition (low complexity). Residues Arg87–Lys170 enclose the PDZ domain. A phosphoserine mark is found at Ser101, Ser184, Ser189, Ser193, and Ser200. The disordered stretch occupies residues Thr183–Ala212. Residues Leu195–Leu209 show a composition bias toward polar residues. The SU domain maps to Pro449–Ala505. The interval Pro483–Ala505 is calmodulin-binding.

Belongs to the syntrophin family. Monomer and homodimer. Interacts with the dystrophin related protein DTNA; SGCG of the dystrophin glycoprotein complex; NOS1; GRB2; GA; TGFA; MAPK12 and the sodium channel proteins SCN4A and SCN5A. Interacts with the dystrophin protein DMD in a calmodulin dependent manner and with related protein UTRN; SGCA of the dystrophin glycoprotein complex; F-actin; calmodulin and with the other members of the syntrophin family SNTB1 and SNTB2. Interacts with MYOC; regulates muscle hypertrophy. Interacts with DTNB. Phosphorylated by CaM-kinase II. Phosphorylation may inhibit the interaction with DMD. As to expression, highly expressed in skeletal and cardiac muscle and is also detected in brain.

Its subcellular location is the cell membrane. The protein resides in the sarcolemma. The protein localises to the cell junction. It is found in the cytoplasm. It localises to the cytoskeleton. In terms of biological role, adapter protein that binds to and probably organizes the subcellular localization of a variety of membrane proteins. May link various receptors to the actin cytoskeleton and the extracellular matrix via dystrophin glycoprotein complex. Plays an important role in synapse formation and in the organization of UTRN and acetylcholine receptors at the neuromuscular synapse. Binds to phosphatidylinositol 4,5-bisphosphate. In Oryctolagus cuniculus (Rabbit), this protein is Alpha-1-syntrophin (SNTA1).